The chain runs to 455 residues: tRNA modification GTPase MnmE (455 aa).

(6S)-5-formyl-5,6,7,8-tetrahydrofolate contacts are provided by Arg24, Glu81, and Lys120. Residues 216 to 378 form the TrmE-type G domain; that stretch reads GMTVVIAGRP…LREHLKACMG (163 aa). Residue Asn226 participates in K(+) binding. Residues 226 to 231, 245 to 251, 270 to 273, 335 to 338, and 359 to 361 each bind GTP; these read NAGKSS, TDIAGTT, DTAG, NKAD, and SAR. Ser230 is a Mg(2+) binding site. K(+)-binding residues include Thr245, Ile247, and Thr250. Position 251 (Thr251) interacts with Mg(2+). Position 455 (Lys455) interacts with (6S)-5-formyl-5,6,7,8-tetrahydrofolate.

It belongs to the TRAFAC class TrmE-Era-EngA-EngB-Septin-like GTPase superfamily. TrmE GTPase family. In terms of assembly, homodimer. Heterotetramer of two MnmE and two MnmG subunits. K(+) serves as cofactor.

Its subcellular location is the cytoplasm. Its function is as follows. Exhibits a very high intrinsic GTPase hydrolysis rate. Involved in the addition of a carboxymethylaminomethyl (cmnm) group at the wobble position (U34) of certain tRNAs, forming tRNA-cmnm(5)s(2)U34. This Pseudomonas paraeruginosa (strain DSM 24068 / PA7) (Pseudomonas aeruginosa (strain PA7)) protein is tRNA modification GTPase MnmE.